The sequence spans 505 residues: Maturase K (505 aa).

It belongs to the intron maturase 2 family. MatK subfamily.

It localises to the plastid. Its subcellular location is the chloroplast. Functionally, usually encoded in the trnK tRNA gene intron. Probably assists in splicing its own and other chloroplast group II introns. The polypeptide is Maturase K (Rhizophora stylosa (Bakau)).